The chain runs to 334 residues: Glucokinase-like protein PD_0680 (334 aa).

Residue 18–23 (ADVGGT) participates in ATP binding.

It belongs to the bacterial glucokinase family.

This chain is Glucokinase-like protein PD_0680, found in Xylella fastidiosa (strain Temecula1 / ATCC 700964).